Consider the following 734-residue polypeptide: MPGKLLWGDIMELEAPLEESESQRKERQKSDRRKSRHHSESEERTETRENGVTDDLDAPKPKKAKMREKLNGDTKEGLRFSDEFSPSHKSRRKDLPNGDVDEYEKRSKRVSSSENSHKSSDKAEETLTREQKEGAFSNFSISEETIKLLKGRGVTYLFPIQVKTFGPVYEGKDLIAQARTGTGKTFSFAIPLIERLQRNQETIKKSRSPKVLVLAPTRELANQVAKDFKDITRKLSVACFYGGTSYQSQINQIRNGIDILVGTPGRIKDHLQSGRLDLSKLRHVVLDEVDQMLDLGFAEQVEDIIHESYKTDSEDNPQTLLFSATCPQWVYKVAKKYMKSRYEQVDLVGKMTQKAATTVEHLAIQCHWSQRPAVIGDVLQVYSGSEGRAIIFCETKKNVTEMAMNPHIKQNAQCLHGDIAQSQREITLKGFREGSFKVLVATNVAARGLDIPEVDLVIQSSPPQDVESYIHRSGRTGRAGRTGICVCFYQPRERGQLRYVEQKAGITFKRVGVPSTMDLVKSKSMDAIRSLASVSYAAVDFFRPSAQRLIEEKGAVDALAAALAHISGASSFEPRSLITSDKGFVTMTLESPEEIQDVSCAWKELNRKLSSNAVSHVTRMCLLKGNMGVCFDVPTSESERLQAEWHDSDWILSVPAKLPEIEEYYDGNTSSNPRQRSGWSGGRSGRSGRSGGRSGGRSGRQSRQGSRSGSRQDGRRRSGNRNRSRSGGHKRNFD.

The segment at 1–131 (MPGKLLWGDI…KAEETLTREQ (131 aa)) is disordered. Acidic residues predominate over residues 11–20 (MELEAPLEES). Basic and acidic residues-rich tracts occupy residues 38–51 (HSES…RENG) and 67–86 (REKL…EFSP). 6 positions are modified to phosphoserine: S41, S81, S85, S113, S119, and S120. Residues 115–131 (NSHKSSDKAEETLTREQ) show a composition bias toward basic and acidic residues. K122 is covalently cross-linked (Glycyl lysine isopeptide (Lys-Gly) (interchain with G-Cter in SUMO2)). The short motif at 134–162 (GAFSNFSISEETIKLLKGRGVTYLFPIQV) is the Q motif element. In terms of domain architecture, Helicase ATP-binding spans 165–344 (FGPVYEGKDL…KKYMKSRYEQ (180 aa)). Position 178-185 (178-185 (ARTGTGKT)) interacts with ATP. Phosphothreonine is present on T244. Residues 287-290 (DEVD) carry the DEVD box motif. The Helicase C-terminal domain maps to 377 to 521 (DVLQVYSGSE…GVPSTMDLVK (145 aa)). At S515 the chain carries Phosphoserine. The interval 664 to 734 (YYDGNTSSNP…RSGGHKRNFD (71 aa)) is disordered. The span at 679 to 698 (WSGGRSGRSGRSGGRSGGRS) shows a compositional bias: gly residues. Over residues 699-709 (GRQSRQGSRSG) the composition is skewed to low complexity. The span at 717-734 (RSGNRNRSRSGGHKRNFD) shows a compositional bias: basic residues.

It belongs to the DEAD box helicase family. DDX21/DDX50 subfamily. Interacts with C1QBP. Interacts with the ubiquitin ligase CTLH complex through GID4. Interacts with TICAM1.

It is found in the nucleus. It localises to the nucleolus. Its subcellular location is the cytoplasm. It catalyses the reaction ATP + H2O = ADP + phosphate + H(+). In terms of biological role, ATP-dependent RNA helicase that may play a role in various aspects of RNA metabolism including pre-mRNA splicing or ribosomal RNA production. Also acts as a viral restriction factor and promotes the activation of the NF-kappa-B and IRF3 signaling pathways following its stimulation with viral RNA or infection with RNA and DNA viruses. For instance, decreases vaccinia virus, herpes simplex virus, Zika virus or dengue virus replication during the early stage of infection. Mechanistically, acts via the adapter TICAM1 and independently of the DDX1-DDX21-DHX36 helicase complex to induce the production of interferon-beta. In Mus musculus (Mouse), this protein is ATP-dependent RNA helicase DDX50 (Ddx50).